The following is a 344-amino-acid chain: WW domain binding protein 1-like (344 aa).

Residues 42–62 (LWWFWLVWTIIIILSCCCVCH) traverse the membrane as a helical segment. Disordered regions lie at residues 132–250 (LLPP…RFTG) and 302–321 (CLSSEGQAREHGHPHLPRPP). Residues 145–173 (PGADQPQGSQGAQSSPLSGPSRSSTRPPS) are compositionally biased toward low complexity. Phosphoserine is present on serine 173. Residues 212–228 (LDRDSECKEELLKDSSS) are compositionally biased toward basic and acidic residues.

Its subcellular location is the membrane. In Rattus norvegicus (Rat), this protein is WW domain binding protein 1-like (Wbp1l).